Reading from the N-terminus, the 380-residue chain is 4-hydroxy-tetrahydrodipicolinate synthase, chloroplastic (380 aa).

A disordered region spans residues 1-44 (MISPTNLLPARKITPVSNGGAATASPSSPSVAARPRRLPSGLQS). The transit peptide at 1-54 (MISPTNLLPARKITPVSNGGAATASPSSPSVAARPRRLPSGLQSVTGRGKVSLA) directs the protein to the chloroplast. The span at 21–33 (AATASPSSPSVAA) shows a compositional bias: low complexity. Threonine 123 lines the pyruvate pocket. The active-site Proton donor/acceptor is the tyrosine 209. Lysine 237 acts as the Schiff-base intermediate with substrate in catalysis. Isoleucine 276 contacts pyruvate.

Belongs to the DapA family. Tetramer of modified subunits derived from two genes in different combinations.

It localises to the plastid. It is found in the chloroplast. The catalysed reaction is L-aspartate 4-semialdehyde + pyruvate = (2S,4S)-4-hydroxy-2,3,4,5-tetrahydrodipicolinate + H2O + H(+). It functions in the pathway amino-acid biosynthesis; L-lysine biosynthesis via DAP pathway; (S)-tetrahydrodipicolinate from L-aspartate: step 3/4. Its activity is regulated as follows. Sensitive to lysine inhibition. This inhibition increase in an allosteric manner with increasing concentration of the inhibitor. Its function is as follows. Catalyzes the condensation of (S)-aspartate-beta-semialdehyde [(S)-ASA] and pyruvate to 4-hydroxy-tetrahydrodipicolinate (HTPA). This Zea mays (Maize) protein is 4-hydroxy-tetrahydrodipicolinate synthase, chloroplastic.